The sequence spans 457 residues: Multidrug resistance protein MdtK (457 aa).

Helical transmembrane passes span 11 to 31, 53 to 73, 93 to 113, 127 to 147, 160 to 180, 189 to 209, 243 to 263, 276 to 296, 314 to 334, 350 to 370, 387 to 407, and 418 to 438; these read LLAL…MGFV, IWLP…PVIA, WLAG…GYII, AVGY…FQVA, GMVM…IFIY, GGVG…LAMV, LPIA…ALLV, IALN…AAVT, AART…IFTV, VVTL…SDSI, IFYI…YILA, and PAGF…MMML.

This sequence belongs to the multi antimicrobial extrusion (MATE) (TC 2.A.66.1) family. MdtK subfamily.

It is found in the cell inner membrane. Its function is as follows. Multidrug efflux pump that functions probably as a Na(+)/drug antiporter. The protein is Multidrug resistance protein MdtK of Escherichia coli O45:K1 (strain S88 / ExPEC).